A 218-amino-acid polypeptide reads, in one-letter code: 1-Cys peroxiredoxin PER1 (218 aa).

A Thioredoxin domain is found at 4 to 164 (LTIGDTVPNL…VVRAVDSLLT (161 aa)). The active-site Cysteine sulfenic acid (-SOH) intermediate is Cys-46. The short motif at 194–217 (KKMFPQGFETADLPSKKGYLRFTK) is the Bipartite nuclear localization signal element.

This sequence belongs to the peroxiredoxin family. Prx6 subfamily. In terms of tissue distribution, embryo and aleurone cells.

It is found in the nucleus. The protein localises to the cytoplasm. It catalyses the reaction a hydroperoxide + [thioredoxin]-dithiol = an alcohol + [thioredoxin]-disulfide + H2O. Its function is as follows. Thiol-specific peroxidase that catalyzes the reduction of hydrogen peroxide and organic hydroperoxides to water and alcohols, respectively. Seems to contribute to the inhibition of germination during stress. The protein is 1-Cys peroxiredoxin PER1 (PER1) of Hordeum vulgare (Barley).